The sequence spans 241 residues: Uridylate kinase (241 aa).

Position 12–15 (12–15 (KISG)) interacts with ATP. Positions 20–25 (GDKGNG) are involved in allosteric activation by GTP. G54 provides a ligand contact to UMP. G55 and R59 together coordinate ATP. UMP-binding positions include D74 and 135-142 (TGNPYFST). ATP-binding residues include N163, Y169, and D172.

Belongs to the UMP kinase family. In terms of assembly, homohexamer.

Its subcellular location is the cytoplasm. It catalyses the reaction UMP + ATP = UDP + ADP. Its pathway is pyrimidine metabolism; CTP biosynthesis via de novo pathway; UDP from UMP (UMPK route): step 1/1. With respect to regulation, allosterically activated by GTP. Inhibited by UTP. Its function is as follows. Catalyzes the reversible phosphorylation of UMP to UDP. The sequence is that of Uridylate kinase from Lactobacillus acidophilus (strain ATCC 700396 / NCK56 / N2 / NCFM).